Consider the following 154-residue polypeptide: 6,7-dimethyl-8-ribityllumazine synthase (154 aa).

Residues Phe22, 56–58 (AFE), and 80–82 (AVI) contribute to the 5-amino-6-(D-ribitylamino)uracil site. Residue 85–86 (AT) coordinates (2S)-2-hydroxy-3-oxobutyl phosphate. The Proton donor role is filled by His88. Residue Phe113 participates in 5-amino-6-(D-ribitylamino)uracil binding. Arg127 contacts (2S)-2-hydroxy-3-oxobutyl phosphate.

This sequence belongs to the DMRL synthase family.

The enzyme catalyses (2S)-2-hydroxy-3-oxobutyl phosphate + 5-amino-6-(D-ribitylamino)uracil = 6,7-dimethyl-8-(1-D-ribityl)lumazine + phosphate + 2 H2O + H(+). The protein operates within cofactor biosynthesis; riboflavin biosynthesis; riboflavin from 2-hydroxy-3-oxobutyl phosphate and 5-amino-6-(D-ribitylamino)uracil: step 1/2. Catalyzes the formation of 6,7-dimethyl-8-ribityllumazine by condensation of 5-amino-6-(D-ribitylamino)uracil with 3,4-dihydroxy-2-butanone 4-phosphate. This is the penultimate step in the biosynthesis of riboflavin. The chain is 6,7-dimethyl-8-ribityllumazine synthase from Clostridium botulinum (strain ATCC 19397 / Type A).